A 240-amino-acid polypeptide reads, in one-letter code: Membrane-spanning 4-domains subfamily A member 7 (240 aa).

At 1–47 (MLLQSQTMGVSHSFTPKGITIPQREKPGHMYQNEDYLQNGLPTETTV) the chain is on the cytoplasmic side. A helical transmembrane segment spans residues 48-68 (LGTVQILCCLLISSLGAILVF). The Extracellular segment spans residues 69 to 83 (APYPSHFNPAISTTL). Residues 84 to 104 (MSGYPFLGALCFGITGSLSII) traverse the membrane as a helical segment. Over 105–121 (SGKQSTKPFDLSSLTSN) the chain is Cytoplasmic. The chain crosses the membrane as a helical span at residues 122–142 (AVSSVTAGAGLFLLADSMVAL). The Extracellular portion of the chain corresponds to 143 to 178 (RTASQHCGSEMDYLSSLPYSEYYYPIYEIKDCLLTS). The helical transmembrane segment at 179–199 (VSLTGVLVVMLIFTVLELLLA) threads the bilayer. Residues 200–240 (AYSSVFWWKQLYSNNPGSSFSSTQSQDHIQQVKKSSSRSWI) are Cytoplasmic-facing. The tract at residues 218–240 (SFSSTQSQDHIQQVKKSSSRSWI) is disordered.

Belongs to the MS4A family. In terms of tissue distribution, ubiquitous expression in normal tissues. Expression is more elevated in adult liver, lung, spleen, and heart than in their fetal counterparts, and is higher in normal tissues than in the cancerous tissue or cell lines. Low levels of expression were detected in the promonocytic stage, whereas high levels of expression were detected in mature monocytes.

The protein resides in the membrane. Its function is as follows. May be involved in signal transduction as a component of a multimeric receptor complex. This Homo sapiens (Human) protein is Membrane-spanning 4-domains subfamily A member 7 (MS4A7).